The primary structure comprises 503 residues: Putative aldehyde dehydrogenase-like protein C9E9.09c (503 aa).

247–252 contributes to the NAD(+) binding site; sequence GSTGVG. A Phosphoserine modification is found at Ser-248. Glu-270 (proton acceptor) is an active-site residue. Cys-304 serves as the catalytic Nucleophile. Ser-501 is subject to Phosphoserine.

It belongs to the aldehyde dehydrogenase family.

In Schizosaccharomyces pombe (strain 972 / ATCC 24843) (Fission yeast), this protein is Putative aldehyde dehydrogenase-like protein C9E9.09c.